Here is a 355-residue protein sequence, read N- to C-terminus: Green-sensitive opsin (355 aa).

At 1 to 36 the chain is on the extracellular side; sequence MNGTEGINFYVPMSNKTGVVRSPFEYPQYYLAEPWK. 2 N-linked (GlcNAc...) asparagine glycosylation sites follow: Asn2 and Asn15. The helical transmembrane segment at 37–61 threads the bilayer; it reads YRLVCCYIFFLISTGLPINLLTLLV. Residues 62 to 73 are Cytoplasmic-facing; sequence TFKHKKLRQPLN. The chain crosses the membrane as a helical span at residues 74–99; sequence YILVNLAVADLFMACFGFTVTFYTAW. At 100–113 the chain is on the extracellular side; that stretch reads NGYFVFGPVGCAVE. Cys110 and Cys187 are oxidised to a cystine. Residues 114 to 133 form a helical membrane-spanning segment; it reads GFFATLGGQVALWSLVVLAI. Residues 134 to 152 are Cytoplasmic-facing; sequence ERYIVVCKPMGNFRFSATH. The helical transmembrane segment at 153-176 threads the bilayer; the sequence is AMMGIAFTWVMAFSCAAPPLFGWS. At 177–202 the chain is on the extracellular side; it reads RYMPEGMQCSCGPDYYTHNPDYHNES. A helical transmembrane segment spans residues 203–230; that stretch reads YVLYMFVIHFIIPVVVIFFSYGRLICKV. The Cytoplasmic segment spans residues 231–252; the sequence is REAAAQQQESATTQKAEKEVTR. Residues 253 to 276 form a helical membrane-spanning segment; the sequence is MVILMVLGFMLAWTPYAVVAFWIF. Topologically, residues 277–284 are extracellular; it reads TNKGADFT. Residues 285–309 traverse the membrane as a helical segment; sequence ATLMAVPAFFSKSSSLYNPIIYVLM. Residue Lys296 is modified to N6-(retinylidene)lysine. Residues 310-355 are Cytoplasmic-facing; sequence NKQFRNCMITTICCGKNPFGDEDVSSTVSQSKTEVSSVSSSQVSPA.

It belongs to the G-protein coupled receptor 1 family. Opsin subfamily. Phosphorylated on some or all of the serine and threonine residues present in the C-terminal region. In terms of tissue distribution, the color pigments are found in the cone photoreceptor cells.

Its subcellular location is the membrane. In terms of biological role, visual pigments are the light-absorbing molecules that mediate vision. They consist of an apoprotein, opsin, covalently linked to cis-retinal. In Gallus gallus (Chicken), this protein is Green-sensitive opsin (PRA1).